The chain runs to 124 residues: Glutaredoxin-2 (124 aa).

Cys-13 and Cys-16 are disulfide-bonded.

Belongs to the glutaredoxin family. As to quaternary structure, homodimer.

The protein resides in the host cytoplasm. Functionally, glutaredoxin necessary for virion morphogenesis and virus replication. Functions as a thiol-disulfide transfer protein between membrane-associated OPG128 and substrates OPG095 or OPG053. The complete pathway for formation of disulfide bonds in intracellular virion membrane proteins sequentially involves oxidation of OPG072, OPG128 and OPG088. Exhibit thioltransferase and dehydroascorbate reductase activities in vitro. The sequence is that of Glutaredoxin-2 (OPG088) from Camelus.